The primary structure comprises 374 residues: Diels-Alderase fsa2 (374 aa).

Residues 1 to 216 (MSNVTVSAFT…MDRVWSPLSW (216 aa)) form a beta-sandwich motif region. Residues 216-374 (WPQVMTESYY…VGTGGQCELS (159 aa)) are beta-barrel motif.

It belongs to the Diels-Alderase family.

The catalysed reaction is (5S)-3-[(2E,6R,8E,10E,12E)-2,6-dimethyltetradeca-2,8,10,12-tetraenoyl]-5-(hydroxymethyl)pyrrolidine-2,4-dione = trichosetin. It participates in mycotoxin biosynthesis. Diels-Alderase; part of the gene cluster that mediates the biosynthesis of the HIV-1 integrase inhibitor equisetin and of fusarisetin A, both trans-fused decalin-containing tetramic acids showing also antimicrobial activity. The PKS module of fsa1 together with the enoylreductase fsa3 catalyze the formation of the polyketide unit which is then conjugated to L-serine by the condensation domain of the fsa1 NRPS module. Activity of the Dieckmann cyclase domain (RED) results in release of the Dieckmann product intermediate. Diels-Alderase fsa2 is involved in endo-selective Diels-Alder cycloaddition to form the decalin ring, leading to the production of N-desmethylequisetin also called trichosetin. Subsequent N-methylation is carried out by fsa4 to give equisetin. The enzymatic gene responsible for the conversion of equisetin to fusarisetin A has not been identified yet and is probably located outside of the fsa cluster. The polypeptide is Diels-Alderase fsa2 (Fusarium sp. (strain FN080326)).